Consider the following 423-residue polypeptide: G-protein coupled receptor 83 (423 aa).

The N-terminal stretch at 1 to 16 (MVPHLLLLCLLPLVRA) is a signal peptide. Residues 18–71 (EPHEGRADEQSAEAALAVPNASHFFSWNNYTFSDWQNFVGRRRYGAESQNPTVK) lie on the Extracellular side of the membrane. N-linked (GlcNAc...) asparagine glycans are attached at residues Asn37 and Asn46. The chain crosses the membrane as a helical span at residues 72 to 92 (ALLIVAYSFIIVFSLFGNVLV). Residues 93–107 (CHVIFKNQRMHSATS) are Cytoplasmic-facing. A helical transmembrane segment spans residues 108-129 (LFIVNLAVADIMITLLNTPFTL). Over 130–145 (VRFVNSTWIFGKGMCH) the chain is Extracellular. Asn134 carries N-linked (GlcNAc...) asparagine glycosylation. Residues Cys144 and Cys224 are joined by a disulfide bond. The helical transmembrane segment at 146–167 (VSRFAQYCSLHVSALTLTAIAV) threads the bilayer. Over 168-186 (DRHQVIMHPLKPRISITKG) the chain is Cytoplasmic. The chain crosses the membrane as a helical span at residues 187–208 (VIYIAVIWTMATFFSLPHAICQ). Residues 209–238 (KLFTFKYSEDIVRSLCLPDFPEPADLFWKY) are Extracellular-facing. Residues 239–260 (LDLATFILLYILPLLIISVAYA) traverse the membrane as a helical segment. Topologically, residues 261 to 293 (RVAKKLWLCNMIGDVTTEQYFALRRKKKKTIKM) are cytoplasmic. A helical transmembrane segment spans residues 294 to 315 (LMLVVVLFALCWFPLNCYVLLL). Over 316 to 327 (SSKVIRTNNALY) the chain is Extracellular. Residues 328–348 (FAFHWFAMSSTCYNPFIYCWL) traverse the membrane as a helical segment. The Cytoplasmic segment spans residues 349 to 423 (NENFRIELKA…SSVEPIVTMS (75 aa)). Polar residues predominate over residues 402 to 414 (PTSQLQSGKTDLS). Residues 402 to 423 (PTSQLQSGKTDLSSVEPIVTMS) are disordered.

Belongs to the G-protein coupled receptor 1 family. In terms of tissue distribution, highly expressed in the brain and spinal cord, and found in lower concentrations in the thymus and other tissues.

It is found in the cell membrane. In terms of biological role, G-protein coupled receptor for PEN, a neuropeptide produced from the precursor protein, proSAAS (encoded by PCSK1N). Acts through a G(i)- and G(q)-alpha-alpha-mediated pathway in response to PEN. Plays a role in food intake and body weight regulation. May contribute to the regulation of anxiety-related behaviors. This chain is G-protein coupled receptor 83, found in Homo sapiens (Human).